Here is a 38-residue protein sequence, read N- to C-terminus: Photosystem II reaction center protein Y (38 aa).

The Lumenal portion of the chain corresponds to 1–4; that stretch reads MSMR. A helical membrane pass occupies residues 5 to 23; it reads LVVVLLPLGIALGWAVYNI. Over 24–38 the chain is Stromal; the sequence is GKLAIEQWRRTGSKV.

It belongs to the PsbY family. As to quaternary structure, PSII is composed of 1 copy each of membrane proteins PsbA, PsbB, PsbC, PsbD, PsbE, PsbF, PsbH, PsbI, PsbJ, PsbK, PsbL, PsbM, PsbT, PsbX, PsbY, PsbZ, Psb30/Ycf12, at least 3 peripheral proteins of the oxygen-evolving complex and a large number of cofactors. It forms dimeric complexes.

It is found in the plastid. It localises to the cyanelle thylakoid membrane. Functionally, loosely associated component of the core of photosystem II (PSII), it is not always seen in crystals. PSII is a light-driven water plastoquinone oxidoreductase, using light energy to abstract electrons from H(2)O, generating a proton gradient subsequently used for ATP formation. The protein is Photosystem II reaction center protein Y of Cyanophora paradoxa.